The primary structure comprises 424 residues: MKIKDWNRSLKVRLVGEFFMNTSFWMVFPFLAIYFAEEFGKGLAGMLLIISQIFSVAANLFGGYFADRFGRKRMLVSAAVAQGFAFLLFALANSPWLTSPELSFVAFTLAGMCGSLYWPASQAMIADVIPEKYRSDVFAVFYTTLNIAVVIGPLFGAVLFFSYRFELLLTVAIISVLLGLLLRFYTEETLSAEVLEKWKEGNATGWRGALLTQVKDYGIILKDRVFLLFVIAGILGAQTFMQLDLVIPVYLKETIDRQTILDFLGREWSVTGETSFGILLAENGLIVALLTVVITRWMTKFPEKWVFFFSALLFGLSMAIFPMTSWFWIFFVAMAVFTFAELMVVGLQQSFISKLAPESMRGQYFAAASLRYTIGRMIAPISIPMTAWFGFGWTFIILGSFAVLSGFVYLWMFHLYDKRTVANI.

A run of 12 helical transmembrane segments spans residues 15 to 35 (VGEF…AIYF), 42 to 62 (GLAG…NLFG), 74 to 94 (MLVS…LANS), 105 to 125 (VAFT…QAMI), 141 to 161 (FYTT…VLFF), 165 to 185 (FELL…LRFY), 227 to 247 (LLFV…DLVI), 274 to 294 (TSFG…TVVI), 305 to 325 (WVFF…PMTS), 327 to 347 (FWIF…VVGL), 367 to 389 (AASL…TAWF), and 393 to 415 (WTFI…MFHL).

The protein belongs to the major facilitator superfamily.

Its subcellular location is the cell membrane. Its activity is regulated as follows. Norfloxacin transport is inhibited by CCCP. Functionally, exhibits dual functions as a Na(+)(Li(+)/K(+))/H(+) antiporter and a multidrug efflux pump. Catalyzes the efflux of Na(+), Li(+) and K(+) in exchange for external protons. Shows a preference for Na(+), followed by K(+) and Li(+). Can also function as a multidrug efflux pump. Transports ethidium bromide and norfloxacin. This is Na(+), Li(+), K(+)/H(+) antiporter from Planococcus maritimus.